The primary structure comprises 69 residues: uncharacterized protein (69 aa).

This is an uncharacterized protein from Salmonella paratyphi A (strain ATCC 9150 / SARB42).